A 440-amino-acid chain; its full sequence is Protein disulfide-isomerase 5-2 (440 aa).

The N-terminal stretch at 1-23 (MRSLKLLLCWISFLTLSISISAS) is a signal peptide. Residues 24-139 (SDDQFTLDGT…LVRYLKKFVA (116 aa)) form the Thioredoxin domain. Active-site nucleophile residues include Cys61 and Cys64. The cysteines at positions 61 and 64 are disulfide-linked. At Thr160 the chain carries Phosphothreonine. Residue Asn171 is glycosylated (N-linked (GlcNAc...) asparagine). The chain crosses the membrane as a helical span at residues 376–396 (SMIGIRSVYILVFLVAVIMML). Residues 406 to 440 (TGVRTATAVRERVDQATTVPEDESSEHKPSDKKED) are disordered. The span at 430–440 (SEHKPSDKKED) shows a compositional bias: basic and acidic residues.

The protein belongs to the protein disulfide isomerase family. As to expression, widely expressed.

Its subcellular location is the membrane. Its function is as follows. Acts as a protein-folding catalyst that interacts with nascent polypeptides to catalyze the formation, isomerization, and reduction or oxidation of disulfide bonds. This Arabidopsis thaliana (Mouse-ear cress) protein is Protein disulfide-isomerase 5-2 (PDIL5-2).